Here is a 63-residue protein sequence, read N- to C-terminus: Frenatin 1.1 (63 aa).

The first 22 residues, 1 to 22 (MAFLKKSLFLVLFLGLVSLSIC), serve as a signal peptide directing secretion. Residues 23–49 (EKEKKEQEDEDENEEEKESEEGSEEKR) constitute a propeptide that is removed on maturation. The interval 25–63 (EKKEQEDEDENEEEKESEEGSEEKRGLLDTLGGILGLGR) is disordered. Residues 30–45 (EDEDENEEEKESEEGS) show a composition bias toward acidic residues. A Leucine amide modification is found at leucine 61.

In terms of tissue distribution, expressed by the skin glands.

Its subcellular location is the secreted. In terms of biological role, antimicrobial peptide with selective activity. Is only active against Micrococcus luteus (MIC=25 ug/ml) and not against Bacillus cereus, Escherichia coli, Leuconostoc mesenteroides, Micrococcus luteus, Pastewella haemolytica, Staphylococcus aureus, Streptococcus faecalis and Streptococcus uberis. The sequence is that of Frenatin 1.1 from Nyctimystes infrafrenatus (White-lipped tree frog).